Reading from the N-terminus, the 564-residue chain is Septation ring formation regulator EzrA (564 aa).

Over 1–4 (MVLF) the chain is Extracellular. The helical transmembrane segment at 5-23 (IILAILVVILIAIGVLFYM) threads the bilayer. The Cytoplasmic portion of the chain corresponds to 24 to 564 (RSNKRNLIEK…KHIEEQVIKE (541 aa)). Coiled coils occupy residues 84–126 (VEEK…HQVT), 165–223 (EAAE…LIRE), 271–303 (MISR…YEVK), and 350–435 (VRQF…RRLL).

This sequence belongs to the EzrA family.

Its subcellular location is the cell membrane. Its function is as follows. Negative regulator of FtsZ ring formation; modulates the frequency and position of FtsZ ring formation. Inhibits FtsZ ring formation at polar sites. Interacts either with FtsZ or with one of its binding partners to promote depolymerization. This chain is Septation ring formation regulator EzrA, found in Staphylococcus epidermidis (strain ATCC 12228 / FDA PCI 1200).